Here is a 378-residue protein sequence, read N- to C-terminus: uncharacterized protein (378 aa).

This is an uncharacterized protein from Orgyia pseudotsugata multicapsid polyhedrosis virus (OpMNPV).